A 727-amino-acid polypeptide reads, in one-letter code: E3 ubiquitin-protein ligase LRSAM1 (727 aa).

6 LRR repeats span residues 30 to 51 (ADDILDISKCELSEIPFGAFAT), 56 to 77 (QKKVLIVHTNHLTSLLPKSCSL), 82 to 103 (TIKVLDLHENQLTALPDDMGQL), 105 to 126 (VLQVLNVERNQLTHLPRSIGNL), 128 to 150 (QLQTLNVKDNKLKELPDTLGELR), and 151 to 172 (SLRTLDISENEIQRLPQMLAHV). The disordered stretch occupies residues 227–248 (GAENTQDSPDGPASRFSREEAE). Serine 234 bears the Phosphoserine mark. Coiled coils occupy residues 241 to 382 (RFSR…NLRQ) and 469 to 547 (RQIR…QENY). The region spanning 569 to 632 (GMERRLVALL…LRRAQDLLAV (64 aa)) is the SAM domain. Serine 604 carries the phosphoserine modification. 2 consecutive short sequence motifs (PTAP motif) follow at residues 653-656 (PTAP) and 665-668 (PSAP). The RING-type zinc finger occupies 679–714 (CVVCLEREAQMVFLTCGHVCCCQQCCQPLRTCPLCR).

As to quaternary structure, interacts with TSG101. Interacts with PHF23. Interacts with FUS. Post-translationally, ubiquitination promoted by PHF23 leads to proteasomal degradation. In terms of tissue distribution, widely expressed.

Its subcellular location is the cytoplasm. It carries out the reaction S-ubiquitinyl-[E2 ubiquitin-conjugating enzyme]-L-cysteine + [acceptor protein]-L-lysine = [E2 ubiquitin-conjugating enzyme]-L-cysteine + N(6)-ubiquitinyl-[acceptor protein]-L-lysine.. The protein operates within protein modification; protein ubiquitination. In terms of biological role, E3 ubiquitin-protein ligase that mediates monoubiquitination of TSG101 at multiple sites, leading to inactivate the ability of TSG101 to sort endocytic (EGF receptors) and exocytic (viral proteins) cargos. Bacterial recognition protein that defends the cytoplasm from invasive pathogens. Localizes to several intracellular bacterial pathogens and generates the bacteria-associated ubiquitin signal leading to autophagy-mediated intracellular bacteria degradation (xenophagy). The sequence is that of E3 ubiquitin-protein ligase LRSAM1 from Mus musculus (Mouse).